A 231-amino-acid polypeptide reads, in one-letter code: DNA damage response protein C (231 aa).

In terms of assembly, homodimer.

It localises to the cytoplasm. Its subcellular location is the nucleoid. Its function is as follows. Appears to contribute to D.radiodurans capacity to survive exposure to ionizing radiation. Likely functions as a DNA damage-induced nucleoid-associated protein (NAP) that contributes to the enhanced level of nucleoid compaction after irradiation by bridging DNA duplexes, thereby limiting the dispersion of the fragmented genome immediately after irradiation to facilitate subsequent DNA repair. In vitro, binds both ssDNA and dsDNA, and is able to compact circular DNA, circularize linear DNA, anneal complementary DNA strands and protect DNA from nucleases. In Deinococcus radiodurans (strain ATCC 13939 / DSM 20539 / JCM 16871 / CCUG 27074 / LMG 4051 / NBRC 15346 / NCIMB 9279 / VKM B-1422 / R1), this protein is DNA damage response protein C.